The chain runs to 291 residues: Nucleotide-binding protein MSMEG_3079/MSMEI_3001 (291 aa).

Position 14 to 21 (14 to 21 (GLSGAGRG)) interacts with ATP. 65–68 (DVRS) provides a ligand contact to GTP.

Belongs to the RapZ-like family.

Functionally, displays ATPase and GTPase activities. This is Nucleotide-binding protein MSMEG_3079/MSMEI_3001 from Mycolicibacterium smegmatis (strain ATCC 700084 / mc(2)155) (Mycobacterium smegmatis).